A 348-amino-acid chain; its full sequence is S-adenosylmethionine:tRNA ribosyltransferase-isomerase (348 aa).

It belongs to the QueA family. Monomer.

It is found in the cytoplasm. The enzyme catalyses 7-aminomethyl-7-carbaguanosine(34) in tRNA + S-adenosyl-L-methionine = epoxyqueuosine(34) in tRNA + adenine + L-methionine + 2 H(+). It functions in the pathway tRNA modification; tRNA-queuosine biosynthesis. Transfers and isomerizes the ribose moiety from AdoMet to the 7-aminomethyl group of 7-deazaguanine (preQ1-tRNA) to give epoxyqueuosine (oQ-tRNA). This is S-adenosylmethionine:tRNA ribosyltransferase-isomerase from Alteromonas mediterranea (strain DSM 17117 / CIP 110805 / LMG 28347 / Deep ecotype).